The following is a 256-amino-acid chain: Isoprenyl transferase (256 aa).

Residue Asp-33 is part of the active site. Position 33 (Asp-33) interacts with Mg(2+). Substrate is bound by residues 34-37 (GNGR), Trp-38, Arg-46, His-50, and 78-80 (STE). Catalysis depends on Asn-81, which acts as the Proton acceptor. Residues Trp-82, Arg-84, Arg-201, and 207–209 (RIS) contribute to the substrate site. Residue Glu-220 participates in Mg(2+) binding.

It belongs to the UPP synthase family. Homodimer. Mg(2+) is required as a cofactor.

Functionally, catalyzes the condensation of isopentenyl diphosphate (IPP) with allylic pyrophosphates generating different type of terpenoids. The chain is Isoprenyl transferase from Staphylococcus epidermidis (strain ATCC 35984 / DSM 28319 / BCRC 17069 / CCUG 31568 / BM 3577 / RP62A).